The following is a 388-amino-acid chain: Protein phosphatase 2C 57 (388 aa).

Residues 59-348 (RWGYTSVQGF…DNISIIIADL (290 aa)) form the PPM-type phosphatase domain. Mn(2+) contacts are provided by Asp-93, Gly-94, Asp-296, and Asp-339. The chain crosses the membrane as a helical span at residues 363 to 383 (VVVELVQAATTIGLVTVGIWM).

The protein belongs to the PP2C family. The cofactor is Mg(2+). It depends on Mn(2+) as a cofactor.

The protein localises to the membrane. It is found in the plastid. Its subcellular location is the chloroplast stroma. The catalysed reaction is O-phospho-L-seryl-[protein] + H2O = L-seryl-[protein] + phosphate. The enzyme catalyses O-phospho-L-threonyl-[protein] + H2O = L-threonyl-[protein] + phosphate. Protein phosphatase specifically required for efficient dephosphorylation of the light-harvesting complex II outer antennae (LCHII) and transition from state 2 to state 1. State transition plays a central role in response to environmental changes and allows to adjust to changing light conditions via the redistribution of light excitation energy between photosystem II (PSII) and photosystem I (PSI) in a short time by relocating LHCII proteins. Mainly responsible for the dephosphorylation of Lhcb1 and Lhcb2 but not of the photosystem II core proteins. This chain is Protein phosphatase 2C 57, found in Arabidopsis thaliana (Mouse-ear cress).